We begin with the raw amino-acid sequence, 166 residues long: Protein UL5 (166 aa).

Belongs to the RL11 family. In terms of assembly, interacts with host IQGAP1.

The protein localises to the host cytoplasm. May play a role in rearrangement of cellular cytoskeleton towards an efficient viral assembly and spreading. The chain is Protein UL5 (UL5) from Human cytomegalovirus (strain AD169) (HHV-5).